A 162-amino-acid polypeptide reads, in one-letter code: NADH-quinone oxidoreductase subunit I (162 aa).

4Fe-4S ferredoxin-type domains lie at 52–82 (LRRY…IEAG) and 93–122 (TRYD…EGPN). Residues Cys-62, Cys-65, Cys-68, Cys-72, Cys-102, Cys-105, Cys-108, and Cys-112 each coordinate [4Fe-4S] cluster.

The protein belongs to the complex I 23 kDa subunit family. As to quaternary structure, NDH-1 is composed of 14 different subunits. Subunits NuoA, H, J, K, L, M, N constitute the membrane sector of the complex. The cofactor is [4Fe-4S] cluster.

It is found in the cell inner membrane. It catalyses the reaction a quinone + NADH + 5 H(+)(in) = a quinol + NAD(+) + 4 H(+)(out). Functionally, NDH-1 shuttles electrons from NADH, via FMN and iron-sulfur (Fe-S) centers, to quinones in the respiratory chain. The immediate electron acceptor for the enzyme in this species is believed to be ubiquinone. Couples the redox reaction to proton translocation (for every two electrons transferred, four hydrogen ions are translocated across the cytoplasmic membrane), and thus conserves the redox energy in a proton gradient. In Xanthobacter autotrophicus (strain ATCC BAA-1158 / Py2), this protein is NADH-quinone oxidoreductase subunit I.